Reading from the N-terminus, the 290-residue chain is Light-independent protochlorophyllide reductase iron-sulfur ATP-binding protein (290 aa).

ATP-binding positions include 10–15 (GIGKST) and Lys-39. Mg(2+) is bound at residue Ser-14. [4Fe-4S] cluster-binding residues include Cys-95 and Cys-129. 180 to 181 (NR) contributes to the ATP binding site.

It belongs to the NifH/BchL/ChlL family. In terms of assembly, homodimer. Protochlorophyllide reductase is composed of three subunits; ChlL, ChlN and ChlB. [4Fe-4S] cluster is required as a cofactor.

Its subcellular location is the plastid. It is found in the chloroplast. The enzyme catalyses chlorophyllide a + oxidized 2[4Fe-4S]-[ferredoxin] + 2 ADP + 2 phosphate = protochlorophyllide a + reduced 2[4Fe-4S]-[ferredoxin] + 2 ATP + 2 H2O. It participates in porphyrin-containing compound metabolism; chlorophyll biosynthesis (light-independent). Its function is as follows. Component of the dark-operative protochlorophyllide reductase (DPOR) that uses Mg-ATP and reduced ferredoxin to reduce ring D of protochlorophyllide (Pchlide) to form chlorophyllide a (Chlide). This reaction is light-independent. The L component serves as a unique electron donor to the NB-component of the complex, and binds Mg-ATP. The polypeptide is Light-independent protochlorophyllide reductase iron-sulfur ATP-binding protein (Pyropia yezoensis (Susabi-nori)).